The chain runs to 288 residues: Polyamine aminopropyltransferase (288 aa).

One can recognise a PABS domain in the interval 9 to 238 (ETLHDQFGQY…GIMTFAWATD (230 aa)). Gln-33 is a binding site for S-methyl-5'-thioadenosine. Spermidine-binding residues include His-64 and Asp-88. S-methyl-5'-thioadenosine is bound by residues Glu-108 and 140 to 141 (DG). Asp-158 serves as the catalytic Proton acceptor. Residue 158-161 (DCTD) participates in spermidine binding. Pro-165 contacts S-methyl-5'-thioadenosine.

This sequence belongs to the spermidine/spermine synthase family. Homodimer or homotetramer.

Its subcellular location is the cytoplasm. The catalysed reaction is S-adenosyl 3-(methylsulfanyl)propylamine + putrescine = S-methyl-5'-thioadenosine + spermidine + H(+). Its pathway is amine and polyamine biosynthesis; spermidine biosynthesis; spermidine from putrescine: step 1/1. Catalyzes the irreversible transfer of a propylamine group from the amino donor S-adenosylmethioninamine (decarboxy-AdoMet) to putrescine (1,4-diaminobutane) to yield spermidine. This is Polyamine aminopropyltransferase from Escherichia coli (strain UTI89 / UPEC).